Here is a 382-residue protein sequence, read N- to C-terminus: 3-hydroxyisobutyryl-CoA hydrolase, mitochondrial (382 aa).

Residues E117, G142, E165, and D173 each coordinate substrate.

Belongs to the enoyl-CoA hydratase/isomerase family.

It localises to the mitochondrion. It carries out the reaction 3-hydroxy-2-methylpropanoyl-CoA + H2O = 3-hydroxy-2-methylpropanoate + CoA + H(+). Its pathway is amino-acid degradation; L-valine degradation. Its function is as follows. Hydrolyzes 3-hydroxyisobutyryl-CoA (HIBYL-CoA), a saline catabolite. Has high activity toward isobutyryl-CoA. Could be an isobutyryl-CoA dehydrogenase that functions in valine catabolism. Also hydrolyzes 3-hydroxypropanoyl-CoA. The polypeptide is 3-hydroxyisobutyryl-CoA hydrolase, mitochondrial (hibch) (Danio rerio (Zebrafish)).